The following is a 286-amino-acid chain: Bifunctional protein FolD (286 aa).

NADP(+) is bound by residues 165–167, S190, and V231; that span reads GRS.

Belongs to the tetrahydrofolate dehydrogenase/cyclohydrolase family. Homodimer.

It carries out the reaction (6R)-5,10-methylene-5,6,7,8-tetrahydrofolate + NADP(+) = (6R)-5,10-methenyltetrahydrofolate + NADPH. It catalyses the reaction (6R)-5,10-methenyltetrahydrofolate + H2O = (6R)-10-formyltetrahydrofolate + H(+). The protein operates within one-carbon metabolism; tetrahydrofolate interconversion. Its function is as follows. Catalyzes the oxidation of 5,10-methylenetetrahydrofolate to 5,10-methenyltetrahydrofolate and then the hydrolysis of 5,10-methenyltetrahydrofolate to 10-formyltetrahydrofolate. In Bacillus cereus (strain B4264), this protein is Bifunctional protein FolD.